Consider the following 735-residue polypeptide: Disintegrin and metalloproteinase domain-containing protein 2 (735 aa).

The first 15 residues, Met-1–Gly-15, serve as a signal peptide directing secretion. A propeptide spanning residues Gly-16 to Arg-176 is cleaved from the precursor. At Gly-16–Lys-680 the chain is on the extracellular side. N-linked (GlcNAc...) asparagine glycosylation is found at Asn-55, Asn-220, and Asn-288. A Peptidase M12B domain is found at His-178–Pro-375. 4 cysteine pairs are disulfide-bonded: Cys-287/Cys-370, Cys-329/Cys-354, Cys-331/Cys-336, and Cys-442/Cys-455. Asn-353 carries an N-linked (GlcNAc...) asparagine glycan. The Disintegrin domain occupies Asn-384–Asn-470. N-linked (GlcNAc...) asparagine glycans are attached at residues Asn-456 and Asn-564. The EGF-like domain maps to Leu-610–Glu-643. 3 cysteine pairs are disulfide-bonded: Cys-614-Cys-625, Cys-619-Cys-631, and Cys-633-Cys-642. A helical transmembrane segment spans residues Trp-681–Val-701. Residues Lys-702–Lys-735 lie on the Cytoplasmic side of the membrane. The disordered stretch occupies residues Ala-716–Lys-735. The residue at position 723 (Ser-723) is a Phosphoserine.

As to quaternary structure, heterodimer with ADAM1/fertilin subunit alpha. Post-translationally, the signal and the metalloprotease domain are cleaved during the epididymal maturation of the spermatozoa. As to expression, expressed specifically in testis.

The protein resides in the membrane. In terms of biological role, sperm surface membrane protein that may be involved in sperm-egg plasma membrane adhesion and fusion during fertilization. Could have a direct role in sperm-zona binding or migration of sperm from the uterus into the oviduct. Interactions with egg membrane could be mediated via binding between its disintegrin-like domain to one or more integrins receptors on the egg. This is a non catalytic metalloprotease-like protein. This is Disintegrin and metalloproteinase domain-containing protein 2 (ADAM2) from Cavia porcellus (Guinea pig).